The primary structure comprises 47 residues: NADH dehydrogenase [ubiquinone] iron-sulfur protein 2 (47 aa).

This sequence belongs to the complex I 49 kDa subunit family. As to quaternary structure, complex I is composed of about 45 different subunits. This is a component of the iron-sulfur (IP) fragment of the enzyme.

It is found in the mitochondrion inner membrane. The enzyme catalyses a ubiquinone + NADH + 5 H(+)(in) = a ubiquinol + NAD(+) + 4 H(+)(out). Core subunit of the mitochondrial membrane respiratory chain NADH dehydrogenase (Complex I) that is believed to belong to the minimal assembly required for catalysis. Complex I functions in the transfer of electrons from NADH to the respiratory chain. The immediate electron acceptor for the enzyme is believed to be ubiquinone. Component of the iron-sulfur (IP) fragment of the enzyme. This chain is NADH dehydrogenase [ubiquinone] iron-sulfur protein 2 (NAD7), found in Solanum tuberosum (Potato).